The following is a 223-amino-acid chain: uncharacterized protein (223 aa).

Positions 1 to 30 (MASATVRNVPLLDDDTIPFGEEDEMRDPSR) are disordered. A compositionally biased stretch (acidic residues) spans 12–25 (LDDDTIPFGEEDEM). 4 helical membrane passes run 35-55 (YTHP…ILIY), 56-76 (MFCG…VLFL), 129-149 (IFWL…LFAL), and 154-174 (FKWL…LYGY).

Belongs to the TVP23 family.

Its subcellular location is the membrane. This is an uncharacterized protein from Drosophila melanogaster (Fruit fly).